Consider the following 391-residue polypeptide: Terminal nucleotidyltransferase 5C (391 aa).

It belongs to the TENT family. Interacts with BCCIP and PABPC1; the interaction has no effect on TENT5C poly(A) polymerase function. Interacts with PLK4; this interaction leads to the TENT5C recruitment into the centrosome.

Its subcellular location is the nucleus. The protein localises to the cytoplasm. It localises to the cytoskeleton. It is found in the microtubule organizing center. The protein resides in the centrosome. It carries out the reaction RNA(n) + ATP = RNA(n)-3'-adenine ribonucleotide + diphosphate. Its function is as follows. Catalyzes the transfer of one adenosine molecule from an ATP to an mRNA poly(A) tail bearing a 3'-OH terminal group and enhances mRNA stability and gene expression. Can also elongate RNA oligos ending with uridine molecule, provided that the sequence is adenosine-rich. Mainly targets mRNAs encoding endoplasmic reticulum-targeted protein. This is Terminal nucleotidyltransferase 5C from Rattus norvegicus (Rat).